Reading from the N-terminus, the 227-residue chain is Ribonuclease 3 (227 aa).

The RNase III domain maps to 6–128 (ASDYQQRIGY…VIAAIYLDAD (123 aa)). Glutamate 41 is a binding site for Mg(2+). Aspartate 45 is a catalytic residue. Mg(2+) contacts are provided by aspartate 114 and glutamate 117. Glutamate 117 is a catalytic residue. In terms of domain architecture, DRBM spans 155 to 225 (DPKTRLQEWL…ASHAIDQLDS (71 aa)). A compositionally biased stretch (basic and acidic residues) spans 203-212 (GEGSSRRLAE). The disordered stretch occupies residues 203 to 227 (GEGSSRRLAEQDAASHAIDQLDSNK).

The protein belongs to the ribonuclease III family. In terms of assembly, homodimer. It depends on Mg(2+) as a cofactor.

It is found in the cytoplasm. It catalyses the reaction Endonucleolytic cleavage to 5'-phosphomonoester.. Digests double-stranded RNA. Involved in the processing of primary rRNA transcript to yield the immediate precursors to the large and small rRNAs (23S and 16S). Processes some mRNAs, and tRNAs when they are encoded in the rRNA operon. Processes pre-crRNA and tracrRNA of type II CRISPR loci if present in the organism. The chain is Ribonuclease 3 from Xylella fastidiosa (strain M23).